We begin with the raw amino-acid sequence, 859 residues long: DNA-directed RNA polymerase subunit Rpo1C (859 aa).

It belongs to the RNA polymerase beta' chain family. As to quaternary structure, part of the RNA polymerase complex. This protein undergoes a protein self splicing that involves a post-translational excision of the intervening region (intein) followed by peptide ligation.

Its subcellular location is the cytoplasm. The enzyme catalyses RNA(n) + a ribonucleoside 5'-triphosphate = RNA(n+1) + diphosphate. DNA-dependent RNA polymerase (RNAP) catalyzes the transcription of DNA into RNA using the four ribonucleoside triphosphates as substrates. Forms part of the jaw domain. This chain is DNA-directed RNA polymerase subunit Rpo1C, found in Methanocaldococcus jannaschii (strain ATCC 43067 / DSM 2661 / JAL-1 / JCM 10045 / NBRC 100440) (Methanococcus jannaschii).